A 102-amino-acid polypeptide reads, in one-letter code: Cell division topological specificity factor (102 aa).

This sequence belongs to the MinE family.

In terms of biological role, prevents the cell division inhibition by proteins MinC and MinD at internal division sites while permitting inhibition at polar sites. This ensures cell division at the proper site by restricting the formation of a division septum at the midpoint of the long axis of the cell. The sequence is that of Cell division topological specificity factor from Synechococcus sp. (strain CC9605).